The chain runs to 73 residues: Protein DSS1 HOMOLOG ON CHROMOSOME V (73 aa).

Belongs to the DSS1/SEM1 family. As to quaternary structure, part of the 26S proteasome. Interacts with BRCA2B. Interacts with EER5. Interacts with UCH1 and UCH2.

Its function is as follows. Subunit of the 26S proteasome which plays a role in ubiquitin-dependent proteolysis. Also associates with the TREX-2 complex that is required for transcription-coupled mRNA export. The polypeptide is Protein DSS1 HOMOLOG ON CHROMOSOME V (Arabidopsis thaliana (Mouse-ear cress)).